Reading from the N-terminus, the 95-residue chain is Large ribosomal subunit protein uL22c (95 aa).

It belongs to the universal ribosomal protein uL22 family. In terms of assembly, part of the 50S ribosomal subunit.

The protein resides in the plastid. It localises to the chloroplast. This protein binds specifically to 23S rRNA. Its function is as follows. The globular domain of the protein is located near the polypeptide exit tunnel on the outside of the subunit, while an extended beta-hairpin is found that lines the wall of the exit tunnel in the center of the 70S ribosome. The protein is Large ribosomal subunit protein uL22c (rpl22) of Cyanidioschyzon merolae (strain NIES-3377 / 10D) (Unicellular red alga).